Consider the following 24-residue polypeptide: RuBisCO large subunit-binding protein subunit beta, chloroplastic (24 aa).

This sequence belongs to the chaperonin (HSP60) family. As to quaternary structure, oligomer of probably six alpha and six beta subunits.

The protein resides in the plastid. It is found in the chloroplast. This protein binds RuBisCO small and large subunits and is implicated in the assembly of the enzyme oligomer. The polypeptide is RuBisCO large subunit-binding protein subunit beta, chloroplastic (Populus euphratica (Euphrates poplar)).